Here is a 121-residue protein sequence, read N- to C-terminus: MQAKLIEILESSQIRLYPQFQPGDNVRVYFKIQEGNKTRIQIFEGLVIKFKKNGLSSNFVVRKISHNVGVERTFLLHSPLVEKVEVIRSNKVRRAKLYYMKKRSGKSARLKEIKRKELKNL.

Belongs to the bacterial ribosomal protein bL19 family.

Its function is as follows. This protein is located at the 30S-50S ribosomal subunit interface and may play a role in the structure and function of the aminoacyl-tRNA binding site. This chain is Large ribosomal subunit protein bL19, found in Mesomycoplasma hyopneumoniae (strain 232) (Mycoplasma hyopneumoniae).